A 116-amino-acid chain; its full sequence is Large ribosomal subunit protein bL17 (116 aa).

It belongs to the bacterial ribosomal protein bL17 family. As to quaternary structure, part of the 50S ribosomal subunit. Contacts protein L32.

The protein is Large ribosomal subunit protein bL17 of Dictyoglomus turgidum (strain DSM 6724 / Z-1310).